The following is an 806-amino-acid chain: Xylosyltransferase sqv-6 (806 aa).

Topologically, residues 1-11 (MLFNGTTKYRD) are cytoplasmic. The helical; Signal-anchor for type II membrane protein transmembrane segment at 12-32 (YAIVISLFFLLNVYLLYNTAQ) threads the bilayer. The Lumenal segment spans residues 33 to 806 (HTQVGNSKHI…GYDEDTQTLI (774 aa)). The cysteines at positions 57 and 85 are disulfide-linked. N-linked (GlcNAc...) asparagine glycosylation is found at Asn-89 and Asn-169. 3 disulfide bridges follow: Cys-101/Cys-445, Cys-464/Cys-478, and Cys-466/Cys-476. A WSC domain is found at 109 to 205 (IDQRIGCFLD…FNAVEIFRTG (97 aa)). UDP-alpha-D-xylose-binding positions include Asp-264 and 293 to 295 (TIW). Asn-325 carries an N-linked (GlcNAc...) asparagine glycan. 398–399 (DW) serves as a coordination point for UDP-alpha-D-xylose. UDP-alpha-D-xylose is bound by residues Ser-479 and 505 to 506 (RK). Residues Asn-614, Asn-655, and Asn-719 are each glycosylated (N-linked (GlcNAc...) asparagine). A disulfide bridge connects residues Cys-772 and Cys-778.

Belongs to the glycosyltransferase 14 family. XylT subfamily. It depends on a divalent metal cation as a cofactor.

It localises to the endoplasmic reticulum membrane. The protein localises to the golgi apparatus membrane. It catalyses the reaction UDP-alpha-D-xylose + L-seryl-[protein] = 3-O-(beta-D-xylosyl)-L-seryl-[protein] + UDP + H(+). It functions in the pathway glycan metabolism; chondroitin sulfate biosynthesis. Its pathway is glycan metabolism; heparan sulfate biosynthesis. Catalyzes the first step in biosynthesis of glycosaminoglycan. Transfers D-xylose from UDP-D-xylose to specific serine residues of the core protein. Required for vulval morphogenesis and zygotic cytokinesis, suggesting that glycosaminoglycans play a central role in vulval morphogenesis. The sequence is that of Xylosyltransferase sqv-6 from Caenorhabditis elegans.